We begin with the raw amino-acid sequence, 647 residues long: S-adenosyl-L-methionine-dependent tRNA 4-demethylwyosine synthase (647 aa).

The Flavodoxin-like domain maps to 50-198 (GKIFFISQTG…AFQDWCDGVI (149 aa)). FMN-binding positions include 56–60 (SQTGT) and 142–174 (VFGVGSRAYGESYNAVAKELSSRMIGLGGLEMI). The 244-residue stretch at 316–559 (YGIESHRCME…LSLKSNGEYE (244 aa)) folds into the Radical SAM core domain. [4Fe-4S] cluster-binding residues include C332, C336, and C339.

Belongs to the TYW1 family. It depends on [4Fe-4S] cluster as a cofactor.

The enzyme catalyses N(1)-methylguanosine(37) in tRNA(Phe) + pyruvate + S-adenosyl-L-methionine = 4-demethylwyosine(37) in tRNA(Phe) + 5'-deoxyadenosine + L-methionine + CO2 + H2O. It functions in the pathway tRNA modification; wybutosine-tRNA(Phe) biosynthesis. Functionally, probable component of the wybutosine biosynthesis pathway. Wybutosine is a hyper modified guanosine with a tricyclic base found at the 3'-position adjacent to the anticodon of eukaryotic phenylalanine tRNA. Catalyzes the condensation of N-methylguanine with 2 carbon atoms from pyruvate to form the tricyclic 4-demethylwyosine, an intermediate in wybutosine biosynthesis. The polypeptide is S-adenosyl-L-methionine-dependent tRNA 4-demethylwyosine synthase (TYW1) (Arabidopsis thaliana (Mouse-ear cress)).